The chain runs to 852 residues: Gamma-tubulin complex component 2 homolog (852 aa).

S73 carries the phosphoserine modification.

This sequence belongs to the TUBGCP family. Gamma-tubulin small complex (Gamma TuSC) is a heterotetrameric complex which contains two molecules of gamma-tubulin, and one molecule each of Dgrip84 and Dgrip91. The gamma-tubulin in this complex binds preferentially to GDP over GTP.

It is found in the cytoplasm. The protein resides in the cytoskeleton. The protein localises to the microtubule organizing center. Its subcellular location is the centrosome. It localises to the perinuclear region. The polypeptide is Gamma-tubulin complex component 2 homolog (Grip84) (Drosophila melanogaster (Fruit fly)).